A 228-amino-acid chain; its full sequence is Small ribosomal subunit protein uS2 (228 aa).

The protein belongs to the universal ribosomal protein uS2 family.

In Buchnera aphidicola subsp. Baizongia pistaciae (strain Bp), this protein is Small ribosomal subunit protein uS2.